Consider the following 304-residue polypeptide: Energy-coupling factor transporter ATP-binding protein EcfA2 (304 aa).

The region spanning 11 to 260 (LKADEILAVS…QTFLEKTTIV (250 aa)) is the ABC transporter domain. Residue 54 to 61 (GDSGSGKS) participates in ATP binding.

It belongs to the ABC transporter superfamily. Energy-coupling factor EcfA family. In terms of assembly, forms a stable energy-coupling factor (ECF) transporter complex composed of 2 membrane-embedded substrate-binding proteins (S component), 2 ATP-binding proteins (A component) and 2 transmembrane proteins (T component).

It is found in the cell membrane. Functionally, ATP-binding (A) component of a common energy-coupling factor (ECF) ABC-transporter complex. Unlike classic ABC transporters this ECF transporter provides the energy necessary to transport a number of different substrates. The sequence is that of Energy-coupling factor transporter ATP-binding protein EcfA2 from Mycoplasma genitalium (strain ATCC 33530 / DSM 19775 / NCTC 10195 / G37) (Mycoplasmoides genitalium).